Here is a 735-residue protein sequence, read N- to C-terminus: Phosphoribosylformylglycinamidine synthase subunit PurL (735 aa).

H49 is a catalytic residue. Y52 and K91 together coordinate ATP. E93 contacts Mg(2+). Substrate contacts are provided by residues 94–97 (SHNH) and R116. The Proton acceptor role is filled by H95. D117 contacts Mg(2+). Q240 lines the substrate pocket. D268 serves as a coordination point for Mg(2+). 312–314 (ESQ) lines the substrate pocket. ATP contacts are provided by D493 and G530. A Mg(2+)-binding site is contributed by N531. Residue S533 participates in substrate binding.

This sequence belongs to the FGAMS family. As to quaternary structure, monomer. Part of the FGAM synthase complex composed of 1 PurL, 1 PurQ and 2 PurS subunits.

The protein resides in the cytoplasm. The catalysed reaction is N(2)-formyl-N(1)-(5-phospho-beta-D-ribosyl)glycinamide + L-glutamine + ATP + H2O = 2-formamido-N(1)-(5-O-phospho-beta-D-ribosyl)acetamidine + L-glutamate + ADP + phosphate + H(+). It functions in the pathway purine metabolism; IMP biosynthesis via de novo pathway; 5-amino-1-(5-phospho-D-ribosyl)imidazole from N(2)-formyl-N(1)-(5-phospho-D-ribosyl)glycinamide: step 1/2. In terms of biological role, part of the phosphoribosylformylglycinamidine synthase complex involved in the purines biosynthetic pathway. Catalyzes the ATP-dependent conversion of formylglycinamide ribonucleotide (FGAR) and glutamine to yield formylglycinamidine ribonucleotide (FGAM) and glutamate. The FGAM synthase complex is composed of three subunits. PurQ produces an ammonia molecule by converting glutamine to glutamate. PurL transfers the ammonia molecule to FGAR to form FGAM in an ATP-dependent manner. PurS interacts with PurQ and PurL and is thought to assist in the transfer of the ammonia molecule from PurQ to PurL. The sequence is that of Phosphoribosylformylglycinamidine synthase subunit PurL from Azorhizobium caulinodans (strain ATCC 43989 / DSM 5975 / JCM 20966 / LMG 6465 / NBRC 14845 / NCIMB 13405 / ORS 571).